A 92-amino-acid chain; its full sequence is Probable Fe(2+)-trafficking protein (92 aa).

This sequence belongs to the Fe(2+)-trafficking protein family.

Functionally, could be a mediator in iron transactions between iron acquisition and iron-requiring processes, such as synthesis and/or repair of Fe-S clusters in biosynthetic enzymes. In Shewanella loihica (strain ATCC BAA-1088 / PV-4), this protein is Probable Fe(2+)-trafficking protein.